A 337-amino-acid chain; its full sequence is Protein ABHD13 (337 aa).

Residues 37–57 form a helical; Signal-anchor for type II membrane protein membrane-spanning segment; it reads FHLYGGIILLLLIFISIAGIL. Catalysis depends on charge relay system residues serine 193, aspartate 268, and histidine 298. Asparagine 299 carries an N-linked (GlcNAc...) asparagine glycan.

The protein belongs to the serine esterase family.

It is found in the membrane. This is Protein ABHD13 from Homo sapiens (Human).